A 510-amino-acid polypeptide reads, in one-letter code: MKTITLRPGQMTLADLRHIYQHPVHITLDESAYVPIQQSVDCVQAILAEQRTAYGINTGFGLLASTRIATEDLENLQRSIVLSHAAGVGEANDDAIVRLIMVLKINSLARGFSGIRLEVIQALITLVNAGVYPHIPLKGSVGASGDLAPLAHMSLLLLGEGKARYQGEWLPAHTALAQAGLQPLTLAAKEGLALLNGTQVSAAYALRGLFEAEDLYAAASVFGCLTVDAALGSRSPFDARIHAVRGQRGQIDAASTYRHLLGERSEISESHKNCDKVQDPYSLRCQPQVMGACLGQIRQAAEVLAIESNAVSDNPLVFAEQGDVLSGGNFHAEPVAMAADNLALALAEVGSLSECRISLMMDKHMSQLPPFLVENGGVNSGFMIAQVTAAALTSENKGLAFPASVDSIPTSANQEDHVSMAPRAGKRLWEMAENVRNILAIEWLAACQGLDLRKGLRTSAILEPARQLLRQHVTYYDKDRFFAPDIEVASQLIAQRHMNELMPAKLLPSL.

The 5-imidazolinone (Ala-Gly) cross-link spans 143–145 (ASG). S144 carries the 2,3-didehydroalanine (Ser) modification.

This sequence belongs to the PAL/histidase family. In terms of processing, contains an active site 4-methylidene-imidazol-5-one (MIO), which is formed autocatalytically by cyclization and dehydration of residues Ala-Ser-Gly.

It is found in the cytoplasm. The enzyme catalyses L-histidine = trans-urocanate + NH4(+). The protein operates within amino-acid degradation; L-histidine degradation into L-glutamate; N-formimidoyl-L-glutamate from L-histidine: step 1/3. The polypeptide is Histidine ammonia-lyase (Yersinia pestis).